Here is a 453-residue protein sequence, read N- to C-terminus: UDP-N-acetylmuramoylalanine--D-glutamate ligase (453 aa).

Residue 117–123 (GTNGKTT) coordinates ATP.

Belongs to the MurCDEF family.

The protein resides in the cytoplasm. It catalyses the reaction UDP-N-acetyl-alpha-D-muramoyl-L-alanine + D-glutamate + ATP = UDP-N-acetyl-alpha-D-muramoyl-L-alanyl-D-glutamate + ADP + phosphate + H(+). It functions in the pathway cell wall biogenesis; peptidoglycan biosynthesis. In terms of biological role, cell wall formation. Catalyzes the addition of glutamate to the nucleotide precursor UDP-N-acetylmuramoyl-L-alanine (UMA). In Caldicellulosiruptor saccharolyticus (strain ATCC 43494 / DSM 8903 / Tp8T 6331), this protein is UDP-N-acetylmuramoylalanine--D-glutamate ligase.